Reading from the N-terminus, the 222-residue chain is MGQQLSGQAVTRLPEKLIKHVGLVRDSGYLTYDEFLGRVAELNDVTAKLASGQKKHLLFEVQPGSDSSALWKVAVRIVCTKINKEDGMVEASRIMNLYQFIQLYKDITSQAAEVFSSNVAAEGSSEDTCQASMWMGRVKQLTDEEECCICMDGKADLILPCAHSFCQKCIDKWSGQSRNCPVCRIQVTAANESWVMSDAPTGEDVAGYILNLADEAGHPHRP.

The RING-type zinc-finger motif lies at 147–184; that stretch reads CCICMDGKADLILPCAHSFCQKCIDKWSGQSRNCPVCR.

In Danio rerio (Zebrafish), this protein is RING finger protein 141 (rnf141).